We begin with the raw amino-acid sequence, 489 residues long: Fumarate reductase (CoM/CoB) subunit B (489 aa).

In terms of domain architecture, 2Fe-2S ferredoxin-type spans 2 to 89 (INVKVLRFEP…GAVIEPVDLP (88 aa)). Positions 53, 58, 61, and 73 each coordinate [2Fe-2S] cluster. 4Fe-4S ferredoxin-type domains are found at residues 124–158 (PEDYQDTKKLRGCIECFSCISSCPVIKESTEYAGP) and 178–209 (AAGGVEEGLYCCTTCGKCAEVCPKELNVPGDA). [4Fe-4S] cluster is bound by residues Cys-136, Cys-139, Cys-142, Cys-146, Cys-189, Cys-192, Cys-195, and Cys-199.

Subunit B of the heterodimeric fumarate reductase of methanogenic Archaea, composed of subunits A (TfrA) and B (TfrB). Requires [2Fe-2S] cluster as cofactor. [4Fe-4S] cluster serves as cofactor.

It localises to the cytoplasm. It carries out the reaction coenzyme B + coenzyme M + fumarate = coenzyme M-coenzyme B heterodisulfide + succinate. Its function is as follows. Catalyzes the reduction of fumarate with reduced coenzyme M (CoM-S-H) and coenzyme B (CoB-S-H). In vitro, is able to reduces fumarate with reduced benzyl viologen, oxidize CoM-S-H and CoB-S-H to CoM-S-S-CoB with methylene blue, and reduce CoM-S-S-CoB with reduced benzyl viologen. The enzyme has specificity for the two thiol compounds as the CoB--CoM heterodisulfide reductase. The enzyme is very sensitive to oxygen. The protein is Fumarate reductase (CoM/CoB) subunit B of Methanothermobacter marburgensis (strain ATCC BAA-927 / DSM 2133 / JCM 14651 / NBRC 100331 / OCM 82 / Marburg) (Methanobacterium thermoautotrophicum).